We begin with the raw amino-acid sequence, 420 residues long: Tyrosine--tRNA ligase (420 aa).

Tyr33 provides a ligand contact to L-tyrosine. The 'HIGH' region motif lies at 38-47 (PTGDSLHAGH). L-tyrosine-binding residues include Tyr167 and Gln171. Residues 227–231 (KFGKS) carry the 'KMSKS' region motif. Residue Lys230 participates in ATP binding. The S4 RNA-binding domain maps to 352 to 418 (PTIIDLLIGA…GKKNFAGVKY (67 aa)).

It belongs to the class-I aminoacyl-tRNA synthetase family. TyrS type 1 subfamily. Homodimer.

The protein localises to the cytoplasm. It carries out the reaction tRNA(Tyr) + L-tyrosine + ATP = L-tyrosyl-tRNA(Tyr) + AMP + diphosphate + H(+). Its function is as follows. Catalyzes the attachment of tyrosine to tRNA(Tyr) in a two-step reaction: tyrosine is first activated by ATP to form Tyr-AMP and then transferred to the acceptor end of tRNA(Tyr). The sequence is that of Tyrosine--tRNA ligase from Corynebacterium diphtheriae (strain ATCC 700971 / NCTC 13129 / Biotype gravis).